The chain runs to 227 residues: Orotidine 5'-phosphate decarboxylase (227 aa).

Residues aspartate 12, lysine 34, 61-70 (DLKLHDIPNT), threonine 117, arginine 178, glutamine 187, glycine 207, and arginine 208 each bind substrate. The active-site Proton donor is the lysine 63.

This sequence belongs to the OMP decarboxylase family. Type 1 subfamily. As to quaternary structure, homodimer.

It carries out the reaction orotidine 5'-phosphate + H(+) = UMP + CO2. Its pathway is pyrimidine metabolism; UMP biosynthesis via de novo pathway; UMP from orotate: step 2/2. Functionally, catalyzes the decarboxylation of orotidine 5'-monophosphate (OMP) to uridine 5'-monophosphate (UMP). This is Orotidine 5'-phosphate decarboxylase from Anaeromyxobacter sp. (strain K).